The primary structure comprises 372 residues: Chaperone protein DnaJ (372 aa).

The 65-residue stretch at 5-69 folds into the J domain; sequence EFYDRLGVSK…QKRAAYDQYG (65 aa). The CR-type zinc finger occupies 129 to 211; sequence GTEKEVKYHR…CHGTGHEKQA (83 aa). Zn(2+) contacts are provided by cysteine 142, cysteine 145, cysteine 159, cysteine 162, cysteine 185, cysteine 188, cysteine 199, and cysteine 202. CXXCXGXG motif repeat units lie at residues 142 to 149, 159 to 166, 185 to 192, and 199 to 206; these read CRTCNGSG, CGRCHGAG, CDVCHGRG, and CTTCHGTG.

The protein belongs to the DnaJ family. Homodimer. Zn(2+) serves as cofactor.

Its subcellular location is the cytoplasm. Functionally, participates actively in the response to hyperosmotic and heat shock by preventing the aggregation of stress-denatured proteins and by disaggregating proteins, also in an autonomous, DnaK-independent fashion. Unfolded proteins bind initially to DnaJ; upon interaction with the DnaJ-bound protein, DnaK hydrolyzes its bound ATP, resulting in the formation of a stable complex. GrpE releases ADP from DnaK; ATP binding to DnaK triggers the release of the substrate protein, thus completing the reaction cycle. Several rounds of ATP-dependent interactions between DnaJ, DnaK and GrpE are required for fully efficient folding. Also involved, together with DnaK and GrpE, in the DNA replication of plasmids through activation of initiation proteins. This is Chaperone protein DnaJ from Streptococcus pneumoniae (strain ATCC BAA-255 / R6).